We begin with the raw amino-acid sequence, 349 residues long: Flap endonuclease 1 (349 aa).

The N-domain stretch occupies residues 1-98 (MDLGEIVEDV…EEIERRKRAK (98 aa)). Mg(2+)-binding residues include Asp27, Asp80, Glu152, Glu154, Asp173, Asp175, and Asp236. Positions 116–258 (EIRKYAQAAV…TALRIIKKYN (143 aa)) are I-domain. The interval 341 to 349 (KQTGLDQWF) is interaction with PCNA.

The protein belongs to the XPG/RAD2 endonuclease family. FEN1 subfamily. In terms of assembly, interacts with PCNA. PCNA stimulates the nuclease activity without altering cleavage specificity. It depends on Mg(2+) as a cofactor.

In terms of biological role, structure-specific nuclease with 5'-flap endonuclease and 5'-3' exonuclease activities involved in DNA replication and repair. During DNA replication, cleaves the 5'-overhanging flap structure that is generated by displacement synthesis when DNA polymerase encounters the 5'-end of a downstream Okazaki fragment. Binds the unpaired 3'-DNA end and kinks the DNA to facilitate 5' cleavage specificity. Cleaves one nucleotide into the double-stranded DNA from the junction in flap DNA, leaving a nick for ligation. Also involved in the base excision repair (BER) pathway. Acts as a genome stabilization factor that prevents flaps from equilibrating into structures that lead to duplications and deletions. Also possesses 5'-3' exonuclease activity on nicked or gapped double-stranded DNA. The chain is Flap endonuclease 1 from Sulfolobus acidocaldarius (strain ATCC 33909 / DSM 639 / JCM 8929 / NBRC 15157 / NCIMB 11770).